The following is a 272-amino-acid chain: Prohibitin 1 (272 aa).

Residues 177–211 adopt a coiled-coil conformation; it reads KEFTEAVEMKQVAQQEAERARFIVEKAEQQKKAAV.

As to quaternary structure, the mitochondrial prohibitin complex consists of two subunits (PHB1 and PHB2), assembled into a membrane-associated ring-shaped supercomplex of approximately 1 mDa.

The protein localises to the mitochondrion inner membrane. The protein resides in the nucleus. It localises to the cytoplasm. Its subcellular location is the cell membrane. In terms of biological role, protein with pleiotropic attributes mediated in a cell-compartment- and tissue-specific manner, which include the plasma membrane-associated cell signaling functions, mitochondrial chaperone, and transcriptional co-regulator of transcription factors in the nucleus. Functionally, in the mitochondria, together with PHB2, forms large ring complexes (prohibitin complexes) in the inner mitochondrial membrane (IMM) and functions as a chaperone protein that stabilizes mitochondrial respiratory enzymes and maintains mitochondrial integrity in the IMM, which is required for mitochondrial morphogenesis, neuronal survival, and normal lifespan. Its function is as follows. In the nucleus, acts as a transcription coregulator, enhances promoter binding by TP53, a transcription factor it activates, but reduces the promoter binding by E2F1, a transcription factor it represses. In the plasma membrane, cooperates with CD86 to mediate CD86-signaling in B lymphocytes that regulates the level of IgG1 produced through the activation of distal signaling intermediates. Upon CD40 engagement, required to activate NF-kappa-B signaling pathway via phospholipase C and protein kinase C activation. The chain is Prohibitin 1 (PHB1) from Gallus gallus (Chicken).